The sequence spans 247 residues: Probable transcriptional regulatory protein BT_0627 (247 aa).

The protein belongs to the TACO1 family.

The protein localises to the cytoplasm. The protein is Probable transcriptional regulatory protein BT_0627 of Bacteroides thetaiotaomicron (strain ATCC 29148 / DSM 2079 / JCM 5827 / CCUG 10774 / NCTC 10582 / VPI-5482 / E50).